A 470-amino-acid chain; its full sequence is L-seryl-tRNA(Sec) selenium transferase (470 aa).

Lys-294 bears the N6-(pyridoxal phosphate)lysine mark.

It belongs to the SelA family. The cofactor is pyridoxal 5'-phosphate.

The protein resides in the cytoplasm. The catalysed reaction is L-seryl-tRNA(Sec) + selenophosphate + H(+) = L-selenocysteinyl-tRNA(Sec) + phosphate. The protein operates within aminoacyl-tRNA biosynthesis; selenocysteinyl-tRNA(Sec) biosynthesis; selenocysteinyl-tRNA(Sec) from L-seryl-tRNA(Sec) (bacterial route): step 1/1. Functionally, converts seryl-tRNA(Sec) to selenocysteinyl-tRNA(Sec) required for selenoprotein biosynthesis. The protein is L-seryl-tRNA(Sec) selenium transferase of Solidesulfovibrio magneticus (strain ATCC 700980 / DSM 13731 / RS-1) (Desulfovibrio magneticus).